The chain runs to 141 residues: Hemoglobin subunit alpha (141 aa).

In terms of domain architecture, Globin spans 1–141; that stretch reads VLSPADKTNV…VSTVLTSKYR (141 aa). S3 carries the post-translational modification Phosphoserine. At K7 the chain carries N6-succinyllysine. The residue at position 8 (T8) is a Phosphothreonine. N6-succinyllysine is present on K11. Position 16 is an N6-acetyllysine; alternate (K16). Position 16 is an N6-succinyllysine; alternate (K16). A Phosphotyrosine modification is found at Y24. Residue K40 is modified to N6-succinyllysine. At S49 the chain carries Phosphoserine. H58 serves as a coordination point for O2. H87 contributes to the heme b binding site. S102 carries the post-translational modification Phosphoserine. T108 carries the phosphothreonine modification. The residue at position 124 (S124) is a Phosphoserine. Phosphothreonine is present on residues T134 and T137. At S138 the chain carries Phosphoserine.

It belongs to the globin family. As to quaternary structure, heterotetramer of two alpha chains and two beta chains. In terms of tissue distribution, red blood cells.

In terms of biological role, involved in oxygen transport from the lung to the various peripheral tissues. Hemopressin acts as an antagonist peptide of the cannabinoid receptor CNR1. Hemopressin-binding efficiently blocks cannabinoid receptor CNR1 and subsequent signaling. This is Hemoglobin subunit alpha (HBA) from Phoca vitulina (Harbor seal).